The primary structure comprises 125 residues: Ribosome-binding factor A (125 aa).

The protein belongs to the RbfA family. Monomer. Binds 30S ribosomal subunits, but not 50S ribosomal subunits or 70S ribosomes.

It localises to the cytoplasm. In terms of biological role, one of several proteins that assist in the late maturation steps of the functional core of the 30S ribosomal subunit. Associates with free 30S ribosomal subunits (but not with 30S subunits that are part of 70S ribosomes or polysomes). Required for efficient processing of 16S rRNA. May interact with the 5'-terminal helix region of 16S rRNA. This Fervidobacterium nodosum (strain ATCC 35602 / DSM 5306 / Rt17-B1) protein is Ribosome-binding factor A.